The following is a 92-amino-acid chain: Bombyxin A-1 (92 aa).

Residues 1-19 (MKILLAIALMLSTVMWVST) form the signal peptide. Residue glutamine 20 is modified to Pyrrolidone carboxylic acid. Disulfide bonds link cysteine 29-cysteine 79, cysteine 41-cysteine 92, and cysteine 78-cysteine 83. A propeptide spans 50-70 (SGAQFASYGSAWLMPYSEGRG) (c peptide like).

It belongs to the insulin family. As to quaternary structure, heterodimer of a B chain and an A chain linked by two disulfide bonds.

The protein resides in the secreted. In terms of biological role, brain peptide responsible for activation of prothoracic glands to produce ecdysone in insects. This chain is Bombyxin A-1 (BBXA1), found in Bombyx mori (Silk moth).